A 162-amino-acid chain; its full sequence is MVMREETIKSLEDPYKYHYKEEWLNTKDPDEQQLFEIFAFGNIKDLPENIILTSLMRSKLEKLTLVTLSEIYNELSYELIKEECQIEDDGIIESHLIQLQNIFKAEMDSVSKSMKFSRRFDCRDVYCHEKELTIIKNPRVTKEYLVQNLRSWETKLKQNILE.

Positions 6–118 (ETIKSLEDPY…SVSKSMKFSR (113 aa)) constitute a PCI domain.

Component of a COP9 signalosome-like (CSN) complex, composed of at least RRI1/CSN5, CSN9, RRI2/CSN10, PCI8/CSN11, CSN12 and CSI1. In the complex, it probably interacts directly with CSN12 and CSI1. Also interacts with RPN5.

It localises to the cytoplasm. The protein localises to the nucleus. Its function is as follows. Component of the COP9 signalosome (CSN) complex that acts as a regulator of the ubiquitin (Ubl) conjugation pathway by mediating the deneddylation of the cullin subunit of SCF-type E3 ubiquitin-protein ligase complexes. The CSN complex is involved in the regulation of the mating pheromone response. In Saccharomyces cerevisiae (strain ATCC 204508 / S288c) (Baker's yeast), this protein is COP9 signalosome complex subunit 9 (CSN9).